The sequence spans 235 residues: Lipoprotein-releasing system ATP-binding protein LolD (235 aa).

The region spanning 5 to 235 (FALANIYKSF…SIDESGFNKI (231 aa)) is the ABC transporter domain. ATP is bound at residue 40–47 (GKSGSGKS).

Belongs to the ABC transporter superfamily. Lipoprotein translocase (TC 3.A.1.125) family. In terms of assembly, the complex is composed of two ATP-binding proteins (LolD) and two transmembrane proteins (LolC and LolE).

It localises to the cell inner membrane. In terms of biological role, part of the ABC transporter complex LolCDE involved in the translocation of mature outer membrane-directed lipoproteins, from the inner membrane to the periplasmic chaperone, LolA. Responsible for the formation of the LolA-lipoprotein complex in an ATP-dependent manner. The protein is Lipoprotein-releasing system ATP-binding protein LolD of Ehrlichia chaffeensis (strain ATCC CRL-10679 / Arkansas).